The sequence spans 1247 residues: Clustered mitochondria protein homolog (1247 aa).

The disordered stretch occupies residues 1–43; sequence MTLGSETKTDVEVPIINGKHEIPQEENDSGHSSINTPDSSEPD. The segment covering 30 to 39 has biased composition (polar residues); the sequence is GHSSINTPDS. The 251-residue stretch at 329–579 folds into the Clu domain; the sequence is SDSLRAIELT…RSMPPDVHYL (251 aa). Positions 1222–1247 are disordered; the sequence is GKQQNGTTEESKTTDVAAQLDNETLD.

Belongs to the CLU family.

The protein localises to the cytoplasm. Its function is as follows. mRNA-binding protein involved in proper cytoplasmic distribution of mitochondria. The protein is Clustered mitochondria protein homolog of Caenorhabditis elegans.